A 410-amino-acid chain; its full sequence is Translation initiation factor 2 subunit gamma (410 aa).

In terms of domain architecture, tr-type G spans 9-202 (QAEVNIGMVG…AIEEFIPTPK (194 aa)). Positions 18–25 (GHVDHGKT) are G1. Positions 21, 25, 46, and 48 each coordinate Mg(2+). 21–26 (DHGKTT) contacts GTP. Residues 46-50 (GITIK) are G2. Zn(2+) contacts are provided by cysteine 61, cysteine 64, cysteine 73, and cysteine 76. The interval 90–93 (DAPG) is G3. GTP contacts are provided by residues 145–148 (NKIE) and 180–182 (SAL). The interval 145–148 (NKIE) is G4. The segment at 180 to 182 (SAL) is G5.

The protein belongs to the TRAFAC class translation factor GTPase superfamily. Classic translation factor GTPase family. EIF2G subfamily. Heterotrimer composed of an alpha, a beta and a gamma chain. It depends on Mg(2+) as a cofactor.

It catalyses the reaction GTP + H2O = GDP + phosphate + H(+). Its function is as follows. eIF-2 functions in the early steps of protein synthesis by forming a ternary complex with GTP and initiator tRNA. The sequence is that of Translation initiation factor 2 subunit gamma from Thermococcus kodakarensis (strain ATCC BAA-918 / JCM 12380 / KOD1) (Pyrococcus kodakaraensis (strain KOD1)).